A 468-amino-acid chain; its full sequence is 3-isopropylmalate dehydratase large subunit (468 aa).

Residues cysteine 349, cysteine 409, and cysteine 412 each coordinate [4Fe-4S] cluster.

This sequence belongs to the aconitase/IPM isomerase family. LeuC type 1 subfamily. In terms of assembly, heterodimer of LeuC and LeuD. Requires [4Fe-4S] cluster as cofactor.

The enzyme catalyses (2R,3S)-3-isopropylmalate = (2S)-2-isopropylmalate. The protein operates within amino-acid biosynthesis; L-leucine biosynthesis; L-leucine from 3-methyl-2-oxobutanoate: step 2/4. Catalyzes the isomerization between 2-isopropylmalate and 3-isopropylmalate, via the formation of 2-isopropylmaleate. The polypeptide is 3-isopropylmalate dehydratase large subunit (Ruegeria pomeroyi (strain ATCC 700808 / DSM 15171 / DSS-3) (Silicibacter pomeroyi)).